The sequence spans 340 residues: Fructoselysine 6-phosphate deglycase (340 aa).

SIS domains are found at residues 35–169 (IVEE…RLAP) and 201–331 (LGEL…PDER).

In terms of assembly, homododecamer.

It carries out the reaction N(6)-(6-phospho-D-fructosyl)-L-lysine + H2O = D-glucose 6-phosphate + L-lysine. It functions in the pathway carbohydrate metabolism; fructoselysine degradation; D-glucose 6-phosphate and lysine from fructoselysine: step 2/2. Catalyzes the reversible conversion of fructoselysine 6-phosphate to glucose 6-phosphate and lysine. Functions in a fructoselysine degradation pathway that allows E.coli to grow on fructoselysine or psicoselysine. This is Fructoselysine 6-phosphate deglycase (frlB) from Escherichia coli O157:H7.